Consider the following 231-residue polypeptide: Octanoyltransferase (231 aa).

Residues 49–231 enclose the BPL/LPL catalytic domain; sequence SEAAEQVWLL…KRTFSEVFGS (183 aa). Substrate is bound by residues 87 to 94, 162 to 164, and 175 to 177; these read RGGQITYH, AIG, and GVS. Cys193 (acyl-thioester intermediate) is an active-site residue.

Belongs to the LipB family.

The protein localises to the cytoplasm. The enzyme catalyses octanoyl-[ACP] + L-lysyl-[protein] = N(6)-octanoyl-L-lysyl-[protein] + holo-[ACP] + H(+). It functions in the pathway protein modification; protein lipoylation via endogenous pathway; protein N(6)-(lipoyl)lysine from octanoyl-[acyl-carrier-protein]: step 1/2. Functionally, catalyzes the transfer of endogenously produced octanoic acid from octanoyl-acyl-carrier-protein onto the lipoyl domains of lipoate-dependent enzymes. Lipoyl-ACP can also act as a substrate although octanoyl-ACP is likely to be the physiological substrate. The polypeptide is Octanoyltransferase (Nitrobacter winogradskyi (strain ATCC 25391 / DSM 10237 / CIP 104748 / NCIMB 11846 / Nb-255)).